A 323-amino-acid chain; its full sequence is tRNA U34 carboxymethyltransferase (323 aa).

Carboxy-S-adenosyl-L-methionine-binding positions include Lys91, Trp105, Lys110, Gly130, 152-154 (DPS), 181-182 (IE), Met196, Tyr200, and Arg315.

The protein belongs to the class I-like SAM-binding methyltransferase superfamily. CmoB family. Homotetramer.

The catalysed reaction is carboxy-S-adenosyl-L-methionine + 5-hydroxyuridine(34) in tRNA = 5-carboxymethoxyuridine(34) in tRNA + S-adenosyl-L-homocysteine + H(+). Catalyzes carboxymethyl transfer from carboxy-S-adenosyl-L-methionine (Cx-SAM) to 5-hydroxyuridine (ho5U) to form 5-carboxymethoxyuridine (cmo5U) at position 34 in tRNAs. In Vibrio atlanticus (strain LGP32) (Vibrio splendidus (strain Mel32)), this protein is tRNA U34 carboxymethyltransferase.